A 404-amino-acid polypeptide reads, in one-letter code: XK-related protein 8 (404 aa).

The next 8 helical transmembrane spans lie at 14–34 (FVFS…DVWL), 44–64 (VTWF…VQTF), 169–189 (AVQF…VVDY), 209–229 (LIYF…LALC), 232–252 (VLSG…ALWA), 262–282 (SVAG…FSWF), 293–313 (SAIY…TWWC), and 324–344 (ALAL…FKAL).

It belongs to the XK family.

Its subcellular location is the cell membrane. It catalyses the reaction a 1,2-diacyl-sn-glycero-3-phospho-L-serine(in) = a 1,2-diacyl-sn-glycero-3-phospho-L-serine(out). Phospholipid scramblase that promotes phosphatidylserine exposure on apoptotic cell surface, possibly by mediating phospholipid scrambling. Phosphatidylserine is a specific marker only present at the surface of apoptotic cells and acts as a specific signal for engulfment. The chain is XK-related protein 8 from Gasterosteus aculeatus (Three-spined stickleback).